The sequence spans 654 residues: tRNA 5-methylaminomethyl-2-thiouridine biosynthesis bifunctional protein MnmC (654 aa).

The segment at 1-235 (MSDFQHAQLD…KREMLSGTYQ (235 aa)) is tRNA (mnm(5)s(2)U34)-methyltransferase. The tract at residues 261–654 (VGGGLAGCAS…LRDLVRGQRG (394 aa)) is FAD-dependent cmnm(5)s(2)U34 oxidoreductase.

It in the N-terminal section; belongs to the methyltransferase superfamily. tRNA (mnm(5)s(2)U34)-methyltransferase family. This sequence in the C-terminal section; belongs to the DAO family. Requires FAD as cofactor.

Its subcellular location is the cytoplasm. The catalysed reaction is 5-aminomethyl-2-thiouridine(34) in tRNA + S-adenosyl-L-methionine = 5-methylaminomethyl-2-thiouridine(34) in tRNA + S-adenosyl-L-homocysteine + H(+). In terms of biological role, catalyzes the last two steps in the biosynthesis of 5-methylaminomethyl-2-thiouridine (mnm(5)s(2)U) at the wobble position (U34) in tRNA. Catalyzes the FAD-dependent demodification of cmnm(5)s(2)U34 to nm(5)s(2)U34, followed by the transfer of a methyl group from S-adenosyl-L-methionine to nm(5)s(2)U34, to form mnm(5)s(2)U34. This is tRNA 5-methylaminomethyl-2-thiouridine biosynthesis bifunctional protein MnmC from Pseudomonas aeruginosa (strain ATCC 15692 / DSM 22644 / CIP 104116 / JCM 14847 / LMG 12228 / 1C / PRS 101 / PAO1).